The chain runs to 919 residues: PAX3- and PAX7-binding protein 1 (919 aa).

The span at Met1–Arg11 shows a compositional bias: basic residues. Disordered regions lie at residues Met1–Glu120, Lys151–Phe206, and Ala237–Phe277. The residue at position 16 (Ser16) is a Phosphoserine. Over residues Ser16–Glu28 the composition is skewed to acidic residues. Over residues Arg49–Pro59 the composition is skewed to low complexity. The segment covering Ala75–Pro87 has biased composition (gly residues). Residue Lys151 forms a Glycyl lysine isopeptide (Lys-Gly) (interchain with G-Cter in SUMO1); alternate linkage. Lys151 is covalently cross-linked (Glycyl lysine isopeptide (Lys-Gly) (interchain with G-Cter in SUMO2); alternate). Residue Ser160 is modified to Phosphoserine. Over residues Pro163–Asn174 the composition is skewed to basic and acidic residues. Acidic residues predominate over residues Gly185–Lys195. Ser193 bears the Phosphoserine mark. Positions Ala237–Glu258 are enriched in basic and acidic residues. Acidic residues predominate over residues Asp259–Asp270. A phosphoserine mark is found at Ser264, Ser297, Ser559, and Ser560. The necessary and sufficient for interaction with PAX7 stretch occupies residues Thr380–Ser560. The segment at Glu533–Ser566 is disordered. Thr565 carries the phosphothreonine modification.

This sequence belongs to the GCF family. As to quaternary structure, interacts with PAX3 and PAX7. Interacts with WDR5; associates with a histone methyltransferase (HMT) complex composed at least of RBBP5, ASH2L, SET1, SET2 and KMT2A/MLL1, KMT2D/MLL2, KMT2C/MLL3 and KMT2B/MLL4 through direct interaction with WDR5. In terms of tissue distribution, ubiquitously expressed in all tissues tested including skeletal muscle. Expressed in primary myoblasts.

Its subcellular location is the nucleus. Adapter protein linking the transcription factors PAX3 and PAX7 to the histone methylation machinery and involved in myogenesis. Associates with a histone methyltransferase complex that specifically mediates dimethylation and trimethylation of 'Lys-4' of histone H3. Mediates the recruitment of that complex to the transcription factors PAX3 and PAX7 on chromatin to regulate the expression of genes involved in muscle progenitor cells proliferation including ID3 and CDC20. The sequence is that of PAX3- and PAX7-binding protein 1 (Paxbp1) from Mus musculus (Mouse).